Reading from the N-terminus, the 291-residue chain is 4-hydroxy-tetrahydrodipicolinate synthase (291 aa).

T45 contacts pyruvate. Y133 serves as the catalytic Proton donor/acceptor. The active-site Schiff-base intermediate with substrate is the K161. Pyruvate is bound at residue I203.

This sequence belongs to the DapA family. As to quaternary structure, homotetramer.

The protein resides in the cytoplasm. It carries out the reaction L-aspartate 4-semialdehyde + pyruvate = (2S,4S)-4-hydroxy-2,3,4,5-tetrahydrodipicolinate + H2O + H(+). It participates in amino-acid biosynthesis; L-lysine biosynthesis via DAP pathway; (S)-tetrahydrodipicolinate from L-aspartate: step 3/4. Its activity is regulated as follows. Is allosterically feedback inhibited by lysine; the N.meningitidis enzyme is significantly more sensitive to lysine than the E.coli enzyme. Shows substrate inhibition by (S)-ASA, with a Ki of 1.7 mM. Its function is as follows. Catalyzes the condensation of (S)-aspartate-beta-semialdehyde [(S)-ASA] and pyruvate to 4-hydroxy-tetrahydrodipicolinate (HTPA). The protein is 4-hydroxy-tetrahydrodipicolinate synthase of Neisseria meningitidis serogroup B (strain ATCC BAA-335 / MC58).